The following is a 451-amino-acid chain: Inositol-pentakisphosphate 2-kinase (451 aa).

Methionine 1 carries the post-translational modification N-acetylmethionine. Residues 19–22 (GGAN) and arginine 40 each bind ATP. Residues arginine 45 and arginine 130 each coordinate substrate. Residues 147 to 149 (NDH) and 166 to 168 (EIK) each bind ATP. The EXKPK motif signature appears at 166 to 170 (EIKPK). Residues lysine 170, lysine 200, and asparagine 238 each contribute to the substrate site. ATP is bound at residue arginine 241. Residues histidine 320, cysteine 330, cysteine 333, and histidine 346 each coordinate Zn(2+). Aspartate 368 contacts substrate. ATP is bound at residue aspartate 407. Residues lysine 411, arginine 415, and tyrosine 419 each contribute to the substrate site.

Belongs to the IPK1 type 2 family. The cofactor is Zn(2+). Strongly expressed in leaves and cauline leaves. Weakly expressed in siliques and flowers. In flower, it is expressed in the major organs of developing flower buds. Strongly expressed in sepals, petals, in the male and female organs of immature and mature flower buds. Strongly expressed in the gynoecium and carpels which are fused to form the gynoecium. Also expressed in the transmitting tissue and ovules.

It catalyses the reaction 1D-myo-inositol 1,3,4,5,6-pentakisphosphate + ATP = 1D-myo-inositol hexakisphosphate + ADP + H(+). Functionally, phosphorylates Ins(1,3,4,5,6)P5 at position 2 to form Ins(1,2,3,4,5,6)P6 (InsP6 or phytate). Phytate is a regulator of intracellular signaling, a highly abundant animal antinutrient, and a phosphate store in plant seeds. Also phosphorylates Ins(1,3,4,6)P4 and Ins(1,4,5,6)P4 to produce Ins(1,2,3,4,6)P5 and Ins(1,2,4,5,6)P5. In Arabidopsis thaliana (Mouse-ear cress), this protein is Inositol-pentakisphosphate 2-kinase (IPK1).